We begin with the raw amino-acid sequence, 801 residues long: Cadherin-20 (801 aa).

The first 34 residues, 1-34 (MWTTGRMSNAKSWLGLGTSLYFWALMDLTATVLS), serve as a signal peptide directing secretion. A propeptide spanning residues 35-59 (STPMPEVELETLFSGRSQSHQRSKR) is cleaved from the precursor. Over 60-619 (SWVWNQFFVL…AYLLPVSLSR (560 aa)) the chain is Extracellular. 5 consecutive Cadherin domains span residues 61–165 (WVWN…EPKF), 166–274 (LDGP…PPRF), 275–389 (PQKH…PPVF), 390–494 (EPGF…APEF), and 494–610 (FPRF…SPEA). An N-linked (GlcNAc...) asparagine glycan is attached at Asn261. N-linked (GlcNAc...) asparagine glycosylation is found at Asn420, Asn461, and Asn542. A helical membrane pass occupies residues 620 to 640 (GALIAILACIFVLLVLVLLIL). Topologically, residues 641-801 (SMRRHRKQPY…GASEGPAPLW (161 aa)) are cytoplasmic.

Expressed in brain. Highest level of expression in the retina. In embryo it is synthesized by the forebrain, anterior neural ridge, developing visual system, primitive external granular layer of the cerebellum and a subset of neural crest cells likely to develop into melanoblasts.

The protein localises to the cell membrane. Cadherins are calcium-dependent cell adhesion proteins. They preferentially interact with themselves in a homophilic manner in connecting cells; cadherins may thus contribute to the sorting of heterogeneous cell types. This is Cadherin-20 (Cdh20) from Mus musculus (Mouse).